We begin with the raw amino-acid sequence, 466 residues long: Soluble pyridine nucleotide transhydrogenase (466 aa).

Glu-36–Cys-45 lines the FAD pocket.

The protein belongs to the class-I pyridine nucleotide-disulfide oxidoreductase family. In terms of assembly, homooligomer; probable homooctamer. FAD is required as a cofactor.

The protein localises to the cytoplasm. The catalysed reaction is NAD(+) + NADPH = NADH + NADP(+). Its function is as follows. Conversion of NADPH, generated by peripheral catabolic pathways, to NADH, which can enter the respiratory chain for energy generation. The protein is Soluble pyridine nucleotide transhydrogenase of Shigella flexneri.